The following is a 475-amino-acid chain: Isocitrate dehydrogenase [NADP] (475 aa).

Residue T104 participates in NADP(+) binding. Positions 113, 115, 119, 129, and 153 each coordinate D-threo-isocitrate. D362 serves as a coordination point for Mg(2+). Residues 394 to 400 (HGTAPKH), N407, Y446, and R450 each bind NADP(+).

Belongs to the isocitrate and isopropylmalate dehydrogenases family. In terms of assembly, homodimer. It depends on Mg(2+) as a cofactor. Mn(2+) serves as cofactor.

It localises to the cytoplasm. The enzyme catalyses D-threo-isocitrate + NADP(+) = 2-oxoglutarate + CO2 + NADPH. Inhibited non-competitively by ADP and 2-oxoglutarate, with respect to isocitrate and in a competitive manner by NADPH. Its function is as follows. Catalyzes the oxidative decarboxylation of isocitrate to 2-oxoglutarate and carbon dioxide with the concomitant reduction of NADP(+). Is specific for NADP(+), cannot use NAD(+). The sequence is that of Isocitrate dehydrogenase [NADP] from Synechocystis sp. (strain ATCC 27184 / PCC 6803 / Kazusa).